Consider the following 397-residue polypeptide: Argininosuccinate synthase (397 aa).

9 to 17 (AYSGGLDTS) is a binding site for ATP. L-citrulline is bound at residue Y87. G117 contacts ATP. L-aspartate is bound by residues T119, N123, and D124. Residue N123 participates in L-citrulline binding. L-citrulline is bound by residues R127, S175, S184, E257, and Y269.

It belongs to the argininosuccinate synthase family. Type 1 subfamily. Homotetramer.

It is found in the cytoplasm. It carries out the reaction L-citrulline + L-aspartate + ATP = 2-(N(omega)-L-arginino)succinate + AMP + diphosphate + H(+). It functions in the pathway amino-acid biosynthesis; L-arginine biosynthesis; L-arginine from L-ornithine and carbamoyl phosphate: step 2/3. In Dictyoglomus thermophilum (strain ATCC 35947 / DSM 3960 / H-6-12), this protein is Argininosuccinate synthase.